A 237-amino-acid chain; its full sequence is BTB/POZ domain-containing protein KCTD6 (237 aa).

The tract at residues 1-104 (MDNGDWGYMM…FYQIEPLIQC (104 aa)) is interaction with ANK1 isoform Mu17. An interaction with CUL3 region spans residues 10 to 110 (MTDPVTLNVG…LIQCLNDPKP (101 aa)). In terms of domain architecture, BTB spans 12 to 81 (DPVTLNVGGH…LRTSELTLPL (70 aa)). The tract at residues 113 to 187 (PMDTFEEVVE…TFGPCDYHQE (75 aa)) is interaction with USP21.

Homopentamer. Interacts with KCTD11; KCTD6 and KCTD11 may associate in pentameric assemblies. Interacts (via BTB domain) with CUL3; initially a 4:4 stoichiometry has been reported, however, electron microscopy revealed pentameric states with a five-pointed pinwheel shape. The interaction with CUL3 is indicative for a participation in a BCR (BTB-CUL3-RBX1) E3 ubiquitin-protein ligase complex. Interacts with HDAC1; probably indirect as the interaction is requires the presence of KCTD11. Interacts with USP21 (preferentially catalytic inactive form). Interacts with ANK1 isoform Mu17; detected in striated muscle. Interacts with USP11. As to expression, highly expressed in cerebellum and brain. Expression is down-regulated in medulloblastoma.

It is found in the cytoplasm. The protein resides in the myofibril. Its subcellular location is the sarcomere. The protein localises to the m line. The protein operates within protein modification; protein ubiquitination. Probable substrate-specific adapter of a BCR (BTB-CUL3-RBX1) E3 ubiquitin-protein ligase complex mediating the ubiquitination and subsequent proteasomal degradation of target proteins. Promotes the ubiquitination of HDAC1; the function seems to depend on KCTD11:KCTD6 oligomerization. Can function as antagonist of the Hedgehog pathway by affecting the nuclear transfer of transcription factor GLI1; the function probably occurs via HDAC1 down-regulation, keeping GLI1 acetylated and inactive. Inhibits cell growth and tumorigenicity of medulloblastoma (MDB). Involved in regulating protein levels of ANK1 isoform Mu17 probably implicating CUL3-dependent proteasomal degradation. This chain is BTB/POZ domain-containing protein KCTD6 (KCTD6), found in Homo sapiens (Human).